The following is a 363-amino-acid chain: G kinase-anchoring protein 1 (363 aa).

Disordered stretches follow at residues 22–124 (DSSS…QLTS) and 143–185 (EESK…KDFQ). Residues 54-79 (NEKKKEKRRKKKEQQQSEANELRNLA) are a coiled coil. The span at 98–107 (HSTHNVPKEY) shows a compositional bias: basic and acidic residues. Residues 160-170 (KVNKKDKRRNN) show a composition bias toward basic residues. Coiled-coil stretches lie at residues 247-298 (LKDG…QEGE) and 328-348 (AALE…VKYQ).

It belongs to the GKAP1 family.

It is found in the golgi apparatus. Its function is as follows. May play a role in the regulation of insulin-dependent IRS1 tyrosine phosphorylation in adipocytes. The chain is G kinase-anchoring protein 1 (gkap1) from Xenopus tropicalis (Western clawed frog).